The following is a 317-amino-acid chain: Cyclin-T1-3 (317 aa).

This sequence belongs to the cyclin family. Cyclin T subfamily. In terms of assembly, interacts with CDKC-1 and CDKC-2. Abundantly expressed in flowers. Expressed in roots, seedlings, rosettes and stems.

In Arabidopsis thaliana (Mouse-ear cress), this protein is Cyclin-T1-3 (CYCT1-3).